Here is a 282-residue protein sequence, read N- to C-terminus: Acetyl-coenzyme A carboxylase carboxyl transferase subunit beta (282 aa).

Residues 28-282 form the CoA carboxyltransferase N-terminal domain; the sequence is IMTKCPSCRT…TKILDIHHVS (255 aa). Cysteine 32, cysteine 35, cysteine 51, and cysteine 54 together coordinate Zn(2+). Residues 32–54 form a C4-type zinc finger; that stretch reads CPSCRTIMYTKELKKNLYVCDSC.

This sequence belongs to the AccD/PCCB family. In terms of assembly, acetyl-CoA carboxylase is a heterohexamer composed of biotin carboxyl carrier protein (AccB), biotin carboxylase (AccC) and two subunits each of ACCase subunit alpha (AccA) and ACCase subunit beta (AccD). It depends on Zn(2+) as a cofactor.

The protein resides in the cytoplasm. It catalyses the reaction N(6)-carboxybiotinyl-L-lysyl-[protein] + acetyl-CoA = N(6)-biotinyl-L-lysyl-[protein] + malonyl-CoA. Its pathway is lipid metabolism; malonyl-CoA biosynthesis; malonyl-CoA from acetyl-CoA: step 1/1. Its function is as follows. Component of the acetyl coenzyme A carboxylase (ACC) complex. Biotin carboxylase (BC) catalyzes the carboxylation of biotin on its carrier protein (BCCP) and then the CO(2) group is transferred by the transcarboxylase to acetyl-CoA to form malonyl-CoA. The chain is Acetyl-coenzyme A carboxylase carboxyl transferase subunit beta from Halalkalibacterium halodurans (strain ATCC BAA-125 / DSM 18197 / FERM 7344 / JCM 9153 / C-125) (Bacillus halodurans).